Here is a 207-residue protein sequence, read N- to C-terminus: FMN-dependent NADH:quinone oxidoreductase 2 (207 aa).

Residues S9, S15–S17, and M97–F100 each bind FMN.

This sequence belongs to the azoreductase type 1 family. Homodimer. Requires FMN as cofactor.

It catalyses the reaction 2 a quinone + NADH + H(+) = 2 a 1,4-benzosemiquinone + NAD(+). It carries out the reaction N,N-dimethyl-1,4-phenylenediamine + anthranilate + 2 NAD(+) = 2-(4-dimethylaminophenyl)diazenylbenzoate + 2 NADH + 2 H(+). In terms of biological role, quinone reductase that provides resistance to thiol-specific stress caused by electrophilic quinones. Its function is as follows. Also exhibits azoreductase activity. Catalyzes the reductive cleavage of the azo bond in aromatic azo compounds to the corresponding amines. The protein is FMN-dependent NADH:quinone oxidoreductase 2 of Burkholderia lata (strain ATCC 17760 / DSM 23089 / LMG 22485 / NCIMB 9086 / R18194 / 383).